A 172-amino-acid chain; its full sequence is Centrin-2 (172 aa).

Residues 1–30 (MASNFKKANMASSSQRKRMSPKPELTEEQK) form a disordered region. An N-acetylalanine modification is found at Ala2. A required for self-assembly region spans residues 2 to 25 (ASNFKKANMASSSQRKRMSPKPEL). Ser20 is subject to Phosphoserine. Lys22 is covalently cross-linked (Glycyl lysine isopeptide (Lys-Gly) (interchain with G-Cter in SUMO2)). The residue at position 26 (Thr26) is a Phosphothreonine. EF-hand domains lie at 28-63 (EQKQEIREAFDLFDADGTGTIDVKELKVAMRALGFE), 64-99 (PKKEEIKKMISEIDKEGTGKMNFGDFLTVMTQKMSE), 101-136 (DTKEEILKAFKLFDDDETGKISFKNLKRVAKELGEN), and 137-172 (LTDEELQEMIDEADRDGDGEVSEQEFLRIMKKTSLY). Asp41, Asp43, Thr45, Thr47, and Glu52 together coordinate Ca(2+). Ca(2+) is bound by residues Asp150, Asp152, Asp154, Glu156, and Glu161.

The protein belongs to the centrin family. As to quaternary structure, monomer. Homooligomer. Interacts with SFI1. Interacts with CCP110. Component of the XPC complex composed of XPC, RAD23B and CETN2. Component of the nuclear pore complex (NPC)-associated TREX-2 complex (transcription and export complex 2), composed of at least GANP, 2 copies of ENY2, PCID2, SEM1/DSS1, and either centrin CETN2 or centrin CETN3. The TREX-2 complex also associates with ALYREF/ALY and with the nucleoporin NUP153. Interacts with USP49. Forms a microtubule-associated complex with POC5, POC1B and FAM161A. Interacts with CCDC15.

It localises to the cytoplasm. Its subcellular location is the cytoskeleton. The protein localises to the microtubule organizing center. It is found in the centrosome. The protein resides in the centriole. It localises to the nucleus envelope. Its subcellular location is the nucleus. The protein localises to the nuclear pore complex. Functionally, plays a fundamental role in microtubule organizing center structure and function. Required for centriole duplication and correct spindle formation. Has a role in regulating cytokinesis and genome stability via cooperation with CALM1 and CCP110. In terms of biological role, involved in global genome nucleotide excision repair (GG-NER) by acting as component of the XPC complex. Cooperatively with RAD23B appears to stabilize XPC. In vitro, stimulates DNA binding of the XPC:RAD23B dimer. The XPC complex is proposed to represent the first factor bound at the sites of DNA damage and together with other core recognition factors, XPA, RPA and the TFIIH complex, is part of the pre-incision (or initial recognition) complex. The XPC complex recognizes a wide spectrum of damaged DNA characterized by distortions of the DNA helix such as single-stranded loops, mismatched bubbles or single-stranded overhangs. The orientation of XPC complex binding appears to be crucial for inducing a productive NER. XPC complex is proposed to recognize and to interact with unpaired bases on the undamaged DNA strand which is followed by recruitment of the TFIIH complex and subsequent scanning for lesions in the opposite strand in a 5'-to-3' direction by the NER machinery. Cyclobutane pyrimidine dimers (CPDs) which are formed upon UV-induced DNA damage esacpe detection by the XPC complex due to a low degree of structural perurbation. Instead they are detected by the UV-DDB complex which in turn recruits and cooperates with the XPC complex in the respective DNA repair. Its function is as follows. As a component of the TREX-2 complex, involved in the export of mRNAs to the cytoplasm through the nuclear pores. The polypeptide is Centrin-2 (CETN2) (Homo sapiens (Human)).